Consider the following 1026-residue polypeptide: Adenylate-forming reductase 06235 (1026 aa).

The adenylation (A) domain stretch occupies residues Phe-37–Ile-422. AMP is bound by residues Val-332–Thr-333 and His-412–Arg-415. The tract at residues Ser-556–Lys-638 is thiolation and peptide carrier (T) domain. A reductase (R) domain region spans residues Cys-682–Val-901. Residues Arg-685 to Ala-688, Thr-769 to Leu-771, and Tyr-840 each bind NADP(+).

The protein belongs to the adenylate-forming reductase family.

In terms of biological role, adenylate-forming reductase, a natural product biosynthesis enzyme that resembles non-ribosomal peptide synthetases, yet serves to modify one substrate, rather than to condense two or more building blocks. The A-domain preferentially accepts L-serine, L-alanine and L-valine as substrates. The natural product of the enzyme is not yet known. The protein is Adenylate-forming reductase 06235 of Coprinopsis cinerea (strain Okayama-7 / 130 / ATCC MYA-4618 / FGSC 9003) (Inky cap fungus).